Here is an 807-residue protein sequence, read N- to C-terminus: Ribosome biogenesis protein ERB1 (807 aa).

The segment at 1-112 (MMAKNNKTTE…DTTSLTDRLS (112 aa)) is disordered. Acidic residues-rich tracts occupy residues 21–30 (EESDVEEDED) and 42–56 (EASE…YESA). Phosphoserine is present on S23. Over residues 57–69 (VEEKESSSDKEAQ) the composition is skewed to basic and acidic residues. A phosphoserine mark is found at S72 and S76. Acidic residues predominate over residues 86–102 (EEEGDEEEDYDSSEFSD). K127 is covalently cross-linked (Glycyl lysine isopeptide (Lys-Gly) (interchain with G-Cter in ubiquitin)). Phosphoserine occurs at positions 146 and 149. Residues 265–383 (RFVPSKNEAK…LRKVPGYGES (119 aa)) form a required for interaction with NOP7 region. Residues 383–419 (SIRERFERSLDLYLAPRVRKNKLNIDPNSLIPELPSP) form a required for interaction with YTM1 region. The residue at position 418 (S418) is a Phosphoserine. WD repeat units follow at residues 435–474 (GHKG…EVYR), 483–523 (NPDD…YDIE), 592–634 (SCKK…TQSP), 637–675 (KSKG…LVKK), 678–717 (PGAR…TPYK), 721–760 (YHEK…DMMK), and 776–807 (INSL…LWTT).

This sequence belongs to the WD repeat BOP1/ERB1 family. In terms of assembly, component of the NOP7 complex, composed of ERB1, NOP7 and YTM1. The complex is held together by ERB1, which interacts with NOP7 via its N-terminal domain and with YTM1 via a high-affinity interaction between the seven-bladed beta-propeller domains of the 2 proteins. The NOP7 complex associates with the 66S pre-ribosome.

The protein resides in the nucleus. It is found in the nucleolus. Its subcellular location is the nucleoplasm. Its function is as follows. Component of the NOP7 complex, which is required for maturation of the 25S and 5.8S ribosomal RNAs and formation of the 60S ribosome. In Saccharomyces cerevisiae (strain YJM789) (Baker's yeast), this protein is Ribosome biogenesis protein ERB1.